We begin with the raw amino-acid sequence, 377 residues long: Presenilin-associated rhomboid-like protein, mitochondrial (377 aa).

The transit peptide at Met-1 to Gly-50 directs the protein to the mitochondrion. Residues Phe-51–Pro-99 lie on the Mitochondrial matrix side of the membrane. A phosphoserine mark is found at Ser-63 and Ser-68. Residues Phe-100–Tyr-119 form a helical membrane-spanning segment. Over Glu-120–Arg-165 the chain is Mitochondrial intermembrane. The helical transmembrane segment at Thr-166–Ser-185 threads the bilayer. At Leu-186 to Ser-205 the chain is on the mitochondrial matrix side. Residues Pro-206–Trp-228 traverse the membrane as a helical segment. Residues Ser-229–Gln-242 are Mitochondrial intermembrane-facing. A helical membrane pass occupies residues Phe-243 to Val-260. Topologically, residues Cys-261–Pro-270 are mitochondrial matrix. Residues Ser-271–Thr-287 traverse the membrane as a helical segment. Ser-275 (nucleophile) is an active-site residue. Residues Lys-288–Arg-293 are Mitochondrial intermembrane-facing. The chain crosses the membrane as a helical span at residues Leu-294 to Met-316. Residues Asp-317–His-330 are Mitochondrial matrix-facing. The helical transmembrane segment at Ala-331–Trp-352 threads the bilayer. His-333 is an active-site residue. The Mitochondrial intermembrane segment spans residues Lys-353–Lys-377.

The protein belongs to the peptidase S54 family. As to quaternary structure, interacts with PSEN1 and PSEN2. Binds OPA1. P-beta is proteolytically processed (beta-cleavage) in a PARL-dependent manner.

The protein resides in the mitochondrion inner membrane. The protein localises to the nucleus. The catalysed reaction is Cleaves type-1 transmembrane domains using a catalytic dyad composed of serine and histidine that are contributed by different transmembrane domains.. In terms of biological role, required for the control of apoptosis during postnatal growth. Essential for proteolytic processing of an antiapoptotic form of OPA1 which prevents the release of mitochondrial cytochrome c in response to intrinsic apoptotic signals. Required for the maturation of PINK1 into its 52kDa mature form after its cleavage by mitochondrial-processing peptidase (MPP). Promotes cleavage of serine/threonine-protein phosphatase PGAM5 in damaged mitochondria in response to loss of mitochondrial membrane potential. Mediates differential cleavage of PINK1 and PGAM5 depending on the health status of mitochondria, disassociating from PINK1 and associating with PGAM5 in response to mitochondrial membrane potential loss. Required for processing of CLPB into a form with higher protein disaggregase activity by removing an autoinhibitory N-terminal peptide. Promotes processing of DIABLO/SMAC in the mitochondrion which is required for DIABLO apoptotic activity. Also required for cleavage of STARD7 and TTC19. Promotes changes in mitochondria morphology regulated by phosphorylation of P-beta domain. The chain is Presenilin-associated rhomboid-like protein, mitochondrial (Parl) from Mus musculus (Mouse).